Consider the following 395-residue polypeptide: NAD(P)H-quinone oxidoreductase subunit H, chloroplastic (395 aa).

Belongs to the complex I 49 kDa subunit family. In terms of assembly, NDH is composed of at least 16 different subunits, 5 of which are encoded in the nucleus.

It localises to the plastid. It is found in the chloroplast thylakoid membrane. The enzyme catalyses a plastoquinone + NADH + (n+1) H(+)(in) = a plastoquinol + NAD(+) + n H(+)(out). It carries out the reaction a plastoquinone + NADPH + (n+1) H(+)(in) = a plastoquinol + NADP(+) + n H(+)(out). NDH shuttles electrons from NAD(P)H:plastoquinone, via FMN and iron-sulfur (Fe-S) centers, to quinones in the photosynthetic chain and possibly in a chloroplast respiratory chain. The immediate electron acceptor for the enzyme in this species is believed to be plastoquinone. Couples the redox reaction to proton translocation, and thus conserves the redox energy in a proton gradient. This Dioscorea elephantipes (Elephant's foot yam) protein is NAD(P)H-quinone oxidoreductase subunit H, chloroplastic.